Here is a 739-residue protein sequence, read N- to C-terminus: Nucleoprotein (739 aa).

Positions 334–363 (VNVGEQYQQLREAATEAEKQLQQYAESREL) form a coiled coil. 2 disordered regions span residues 414–475 (RPNL…YHDD) and 493–641 (DDNK…DIGQ). The segment covering 531–546 (SDNNQQSADSEEQGGQ) has biased composition (polar residues). The segment covering 570 to 579 (TLMDQGDDDP) has biased composition (acidic residues). A compositionally biased stretch (basic and acidic residues) spans 614-624 (AEAHEPPHKSS). Over residues 625 to 634 (NEPAETSQLN) the composition is skewed to polar residues.

The protein belongs to the filoviruses nucleoprotein family. Homooligomer. Homomultimerizes to form the nucleocapsid. Binds to viral genomic RNA. Interacts with VP35 and VP30 to form the nucleocapsid. Interacts with host PPP2R5C; this interaction leads to VP30 dephosphorylation and viral transcription. Interacts with VP24; this interaction facilitates nucleocapsid assembly and genome packaging. Interacts with matrix protein VP40; this interaction allows recruitment of the nucleocapsid into progeny virions. Interacts with host STAU1. Interacts with host NXF1 (via RNA-binding domain); this interaction recruits NXF1 to the inclusion bodies were viral replication takes place, probably to export viral mRNA-NXF1 complexes from these sites. Interacts with host CCDC92; this interaction sequesters NP in the host cytoplasm. Interacts with host TRIM14. Post-translationally, phosphorylated and O-glycosylated by host. Acetylated by host EP300 in vitro.

It localises to the virion. Its subcellular location is the host cytoplasm. In terms of biological role, oligomerizes into helical capsid to encapsidate the viral genome, protecting it from nucleases and the cellular innate immune response. VP35 binds to and stabilizes monomeric NP, keeping it soluble. Upon virus replication, NP is recruited to bind cooperatively viral genomic RNA and VP35 is released. The encapsidated genomic RNA is termed the nucleocapsid and serves as template for transcription and replication. The nucleocapsid is helical with a pitch of 10.81 NP per turn and a diameter of about 22nm. Each NP binds to six nucleotides of viral genomic RNA, three being exposed to the solvant and three hidden into the nucleocapsid. Also recruits host PPP2R5C phosphatase to dephosphorylate VP30 and thereby promote viral transcription. Upon virion assembly and budding, NP binds to VP24 and possibly host STAU1. This Reston ebolavirus (strain Reston-89) (REBOV) protein is Nucleoprotein (NP).